We begin with the raw amino-acid sequence, 2053 residues long: Nonribosomal peptide synthetase pboA (2053 aa).

Residues alanine 16–arginine 402 are adenylation 1. In terms of domain architecture, Carrier 1 spans arginine 503–arginine 579. Serine 540 is subject to O-(pantetheine 4'-phosphoryl)serine. The tract at residues asparagine 611–glutamine 896 is condensation 1. The tract at residues serine 1034 to arginine 1418 is adenylation 2. Residues valine 1515 to isoleucine 1593 form the Carrier 2 domain. Serine 1553 carries the post-translational modification O-(pantetheine 4'-phosphoryl)serine. Positions asparagine 1630–aspartate 1981 are condensation 2.

Belongs to the NRP synthetase family. Pantetheine 4'-phosphate serves as cofactor.

Its pathway is secondary metabolite biosynthesis. Nonribosomal peptide synthetase; part of the gene cluster that mediates the biosynthesis of protubonine B, a hydroxylated and diacetylated cyclo-L-Trp-L-Leu derivative. The first step of the protubonine B synthesis is performed by the nonribosomal peptide synthetase pboA that catalyzes the formation of cyclo-L-Trp-L-Leu by condensing L-Leu with L-Trp. The flavin-dependent monooxygenase pboD is responsible for hydroxylation at C-3 of the indole ring and subsequent formation of the pyrrolidine ring, leadind to protubonine D. Protubonine D is further diacetylated by two acetyltransferases, pboB and pboC, to form the final product protubonine B via protubonine C. The protein is Nonribosomal peptide synthetase pboA of Aspergillus ustus.